Here is a 418-residue protein sequence, read N- to C-terminus: Tyrosine--tRNA ligase (418 aa).

Tyrosine 34 contacts L-tyrosine. The 'HIGH' region signature appears at 39–48 (PTADSLHLGH). Positions 169 and 173 each coordinate L-tyrosine. The 'KMSKS' region signature appears at 229-233 (KFGKS). Lysine 232 contributes to the ATP binding site. The region spanning 352 to 410 (LNIVELLVTSGIVNSKRQAREDVQNGAIYVNGERVQDLDYTLSDSDKIDGELTVIRRGK) is the S4 RNA-binding domain.

It belongs to the class-I aminoacyl-tRNA synthetase family. TyrS type 1 subfamily. As to quaternary structure, homodimer.

The protein localises to the cytoplasm. It carries out the reaction tRNA(Tyr) + L-tyrosine + ATP = L-tyrosyl-tRNA(Tyr) + AMP + diphosphate + H(+). Functionally, catalyzes the attachment of tyrosine to tRNA(Tyr) in a two-step reaction: tyrosine is first activated by ATP to form Tyr-AMP and then transferred to the acceptor end of tRNA(Tyr). The sequence is that of Tyrosine--tRNA ligase from Streptococcus suis (strain 98HAH33).